The sequence spans 206 residues: Ribonuclease M5 (206 aa).

The 84-residue stretch at 8–91 (NEVIVVEGRD…AFLNRDEARP (84 aa)) folds into the Toprim domain. Residues Glu-14, Asp-60, and Asp-62 each coordinate Mg(2+).

It belongs to the ribonuclease M5 family. Mg(2+) serves as cofactor.

The protein resides in the cytoplasm. It catalyses the reaction Endonucleolytic cleavage of RNA, removing 21 and 42 nucleotides, respectively, from the 5'- and 3'-termini of a 5S-rRNA precursor.. Its function is as follows. Required for correct processing of both the 5' and 3' ends of 5S rRNA precursor. Cleaves both sides of a double-stranded region yielding mature 5S rRNA in one step. This chain is Ribonuclease M5, found in Lactococcus lactis subsp. lactis (strain IL1403) (Streptococcus lactis).